The primary structure comprises 929 residues: LPS-assembly protein LptD (929 aa).

The signal sequence occupies residues 1–24 (MKLRFIRSAGWLFLLFCLACNARA). The tract at residues 26-208 (LPPLSSKPEQ…EAGDEKLRLA (183 aa)) is disordered. The span at 44-74 (GDDKPVVIDTERIRGHHEYESGTRSESELRS) shows a compositional bias: basic and acidic residues. Polar residues predominate over residues 154–164 (RTQSAPRTLSA). Residues 181–208 (DQDRPGFAEGERIGGHREEAGDEKLRLA) show a composition bias toward basic and acidic residues.

This sequence belongs to the LptD family. As to quaternary structure, component of the lipopolysaccharide transport and assembly complex. Interacts with LptE and LptA.

The protein localises to the cell outer membrane. In terms of biological role, together with LptE, is involved in the assembly of lipopolysaccharide (LPS) at the surface of the outer membrane. In Nitrosospira multiformis (strain ATCC 25196 / NCIMB 11849 / C 71), this protein is LPS-assembly protein LptD.